The following is a 589-amino-acid chain: Probable translation initiation factor IF-2 (589 aa).

The 222-residue stretch at 3–224 (VRSPFVVVMG…AGVSQRFIPR (222 aa)) folds into the tr-type G domain. Positions 12 to 19 (GHVDVGKT) are G1. Position 12-19 (12-19 (GHVDVGKT)) interacts with GTP. The G2 stretch occupies residues 37 to 41 (MITQH). The segment at 78-81 (DTPG) is G3. GTP contacts are provided by residues 78 to 82 (DTPGH) and 132 to 135 (NKLD). Residues 132 to 135 (NKLD) form a G4 region. Residues 200-202 (SAV) are G5.

It belongs to the TRAFAC class translation factor GTPase superfamily. Classic translation factor GTPase family. IF-2 subfamily.

In terms of biological role, function in general translation initiation by promoting the binding of the formylmethionine-tRNA to ribosomes. Seems to function along with eIF-2. This chain is Probable translation initiation factor IF-2, found in Pyrobaculum neutrophilum (strain DSM 2338 / JCM 9278 / NBRC 100436 / V24Sta) (Thermoproteus neutrophilus).